The primary structure comprises 76 residues: Small ribosomal subunit protein eS17 (76 aa).

The protein belongs to the eukaryotic ribosomal protein eS17 family.

In Picrophilus torridus (strain ATCC 700027 / DSM 9790 / JCM 10055 / NBRC 100828 / KAW 2/3), this protein is Small ribosomal subunit protein eS17.